A 140-amino-acid polypeptide reads, in one-letter code: Putative pre-16S rRNA nuclease (140 aa).

It belongs to the YqgF nuclease family.

The protein resides in the cytoplasm. Its function is as follows. Could be a nuclease involved in processing of the 5'-end of pre-16S rRNA. This Moorella thermoacetica (strain ATCC 39073 / JCM 9320) protein is Putative pre-16S rRNA nuclease.